The sequence spans 326 residues: Tetraacyldisaccharide 4'-kinase (326 aa).

58 to 65 (SVGGNGKT) contributes to the ATP binding site.

Belongs to the LpxK family.

The enzyme catalyses a lipid A disaccharide + ATP = a lipid IVA + ADP + H(+). Its pathway is glycolipid biosynthesis; lipid IV(A) biosynthesis; lipid IV(A) from (3R)-3-hydroxytetradecanoyl-[acyl-carrier-protein] and UDP-N-acetyl-alpha-D-glucosamine: step 6/6. In terms of biological role, transfers the gamma-phosphate of ATP to the 4'-position of a tetraacyldisaccharide 1-phosphate intermediate (termed DS-1-P) to form tetraacyldisaccharide 1,4'-bis-phosphate (lipid IVA). The chain is Tetraacyldisaccharide 4'-kinase from Pseudoalteromonas translucida (strain TAC 125).